The following is a 2220-amino-acid chain: Calcineurin-binding protein cabin-1 (2220 aa).

2 positions are modified to phosphoserine: serine 10 and serine 11. Threonine 12 carries the post-translational modification Phosphothreonine. Phosphoserine is present on residues serine 20 and serine 66. TPR repeat units follow at residues 36 to 69 (AFAL…SLLR), 90 to 123 (YSTY…DSTD), and 125 to 157 (NLWY…NPDH). The tract at residues 361–400 (GAPVGDISGGDKSKKGVKRKKISEESGETAKRRSARVRNT) is disordered. Residues 382–391 (ISEESGETAK) show a composition bias toward basic and acidic residues. Phosphoserine is present on residues serine 433 and serine 450. A TPR 4 repeat occupies 615–648 (VRVYWLKARFLALQGDMEQALENYDICTEMLQSS). Phosphoserine is present on serine 673. TPR repeat units follow at residues 1055–1088 (NELY…CPNR) and 1106–1139 (KLNS…DSSN). Disordered stretches follow at residues 1299-1476 (FARG…STPT), 1668-1845 (AEGS…RLSR), 1916-2165 (AQRQ…GSIS), and 2197-2220 (VLET…YMDI). The segment covering 1301-1324 (RGEEKNTPKASEKEKACLVDEDSH) has biased composition (basic and acidic residues). Residues 1327–1349 (AGTLPGPGASLPSSSGPGLTSPP) show a composition bias toward low complexity. Polar residues predominate over residues 1377-1397 (DSTAVALSDSSSTQDFFNEPT). The segment covering 1402 to 1412 (GSRKSYTEKRL) has biased composition (basic and acidic residues). The residue at position 1439 (serine 1439) is a Phosphoserine. Gly residues predominate over residues 1715 to 1725 (SGPGPEPGGKV). 2 stretches are compositionally biased toward basic and acidic residues: residues 1744-1753 (SGERKDKESP) and 1784-1794 (PARDRGPESRP). Residues 1812-1823 (PLTPAQPAPAPA) show a composition bias toward pro residues. Polar residues-rich tracts occupy residues 1918 to 1927 (RQASGDTPTT) and 1975 to 1989 (TIIT…STLD). Phosphothreonine is present on threonine 1924. The segment covering 2070 to 2081 (GKLRPEPRRDGE) has biased composition (basic and acidic residues). A compositionally biased stretch (low complexity) spans 2091–2112 (PLSSPPTAASSKAPSSGSAQPP). Serine 2094 carries the post-translational modification Phosphoserine. The required for interaction with calcineurin stretch occupies residues 2116–2153 (PGKPEPSRAKSRPLPNMPKLVIPSAATKFPPEITVTPP). Phosphothreonine occurs at positions 2151 and 2154. The span at 2207–2220 (LESETDEDDDYMDI) shows a compositional bias: acidic residues.

In terms of assembly, component of a complex that includes at least ASF1A, CABIN1, HIRA, histone H3.3 and UBN1. Interacts with calcineurin. Interacts with MEF2B. Post-translationally, activated through PKC-mediated hyperphosphorylation. Phosphorylation by the DNA damage kinases ATM and CHK2 enhances ubiquitination. Upon genotoxic stress, ubiquitination by the DCX(DDB2) E3 ubiquitin-protein ligase complex targets CABIN1 for proteasomal degradation, leading to the release of p53/TP53. Widely expressed in different tissues.

It is found in the nucleus. May be required for replication-independent chromatin assembly. May serve as a negative regulator of T-cell receptor (TCR) signaling via inhibition of calcineurin. Inhibition of activated calcineurin is dependent on both PKC and calcium signals. Acts as a negative regulator of p53/TP53 by keeping p53 in an inactive state on chromatin at promoters of a subset of it's target genes. The polypeptide is Calcineurin-binding protein cabin-1 (CABIN1) (Homo sapiens (Human)).